The sequence spans 346 residues: Glycosyltransferase 1 domain-containing protein 1 (346 aa).

Positions 1-16 (MRLLFLAVLRPHTGNA) are cleaved as a signal peptide.

Belongs to the glycosyltransferase group 1 family. Glycosyltransferase 4 subfamily.

Its subcellular location is the secreted. This Homo sapiens (Human) protein is Glycosyltransferase 1 domain-containing protein 1 (GLT1D1).